The chain runs to 1079 residues: Integrator complex subunit 3 homolog (1079 aa).

Disordered stretches follow at residues 539–574 (ESSE…DDLP), 925–949 (YPSS…TPSA), and 1010–1079 (AVGR…NDSD). Over residues 938 to 949 (KGSSAASSTPSA) the composition is skewed to low complexity. Residues serine 1049, serine 1050, serine 1054, and serine 1055 each carry the phosphoserine modification. Basic residues predominate over residues 1062–1073 (HKITQAAKKRKK).

It belongs to the Integrator subunit 3 family. As to quaternary structure, belongs to the multiprotein complex Integrator, at least composed of IntS1, IntS2, IntS3, IntS4, omd/IntS5, IntS6, defl/IntS7, IntS8, IntS9, IntS10, IntS11, IntS12, asun/IntS13, IntS14 and IntS15. The core complex associates with protein phosphatase 2A subunits mts/PP2A and Pp2A-29B, to form the Integrator-PP2A (INTAC) complex.

Its subcellular location is the nucleus. The protein resides in the cytoplasm. In terms of biological role, component of the integrator complex, a multiprotein complex that terminates RNA polymerase II (Pol II) transcription in the promoter-proximal region of genes. The integrator complex provides a quality checkpoint during transcription elongation by driving premature transcription termination of transcripts that are unfavorably configured for transcriptional elongation: the complex terminates transcription by (1) catalyzing dephosphorylation of the C-terminal domain (CTD) of Pol II subunit Polr2A/Rbp1 and Spt5, and (2) degrading the exiting nascent RNA transcript via endonuclease activity. The integrator complex is also involved in the 3'-end processing of the U7 snRNA, and also the spliceosomal snRNAs U1, U2, U4 and U5. The sequence is that of Integrator complex subunit 3 homolog (IntS3) from Drosophila virilis (Fruit fly).